The sequence spans 156 residues: MSRRHSAEKREVIPDAKYGDIILTKFMNSIMYDGKKSIAEAIVYGAFDIIEQKSHNEPLSVFKQALDNVAPSIEVRSRRVGGATYQVPVEVRSERRQALAIRWIITAARGRNDKTMIDRLSAELLDAANNRGNAVKKREDTHRMAEANRAFSHYRW.

Belongs to the universal ribosomal protein uS7 family. As to quaternary structure, part of the 30S ribosomal subunit. Contacts proteins S9 and S11.

In terms of biological role, one of the primary rRNA binding proteins, it binds directly to 16S rRNA where it nucleates assembly of the head domain of the 30S subunit. Is located at the subunit interface close to the decoding center, probably blocks exit of the E-site tRNA. In Beijerinckia indica subsp. indica (strain ATCC 9039 / DSM 1715 / NCIMB 8712), this protein is Small ribosomal subunit protein uS7.